Here is a 304-residue protein sequence, read N- to C-terminus: Ornithine carbamoyltransferase (304 aa).

Residues 47–50 (STRT), Arg98, and 125–128 (HPCQ) each bind carbamoyl phosphate. Residues Asn156, Asp221, and 225–226 (SM) contribute to the L-ornithine site. Residues 262–263 (CL) and Arg290 each bind carbamoyl phosphate.

This sequence belongs to the aspartate/ornithine carbamoyltransferase superfamily. OTCase family.

It is found in the cytoplasm. The catalysed reaction is carbamoyl phosphate + L-ornithine = L-citrulline + phosphate + H(+). It functions in the pathway amino-acid biosynthesis; L-arginine biosynthesis; L-arginine from L-ornithine and carbamoyl phosphate: step 1/3. Its function is as follows. Reversibly catalyzes the transfer of the carbamoyl group from carbamoyl phosphate (CP) to the N(epsilon) atom of ornithine (ORN) to produce L-citrulline. This chain is Ornithine carbamoyltransferase, found in Methanococcus aeolicus (strain ATCC BAA-1280 / DSM 17508 / OCM 812 / Nankai-3).